The sequence spans 637 residues: Chaperone protein HtpG (637 aa).

Residues 1–328 are a; substrate-binding; it reads MADIEELKFD…SSDLPLNISR (328 aa). The segment at 329–556 is b; sequence ETLQNNRIVE…DNSMDIRMER (228 aa). Positions 488 to 508 are disordered; that stretch reads IGASDDSGDKTSEDSGESASD. A compositionally biased stretch (basic and acidic residues) spans 494 to 508; sequence SGDKTSEDSGESASD. The interval 557–637 is c; that stretch reads FLREQKQLNY…GVLAKIFSSK (81 aa).

It belongs to the heat shock protein 90 family. In terms of assembly, homodimer.

The protein resides in the cytoplasm. Functionally, molecular chaperone. Has ATPase activity. In Anaplasma phagocytophilum (strain HZ), this protein is Chaperone protein HtpG.